The primary structure comprises 184 residues: Small ribosomal subunit protein uS7 (184 aa).

It belongs to the universal ribosomal protein uS7 family. As to quaternary structure, part of the 30S ribosomal subunit.

In terms of biological role, one of the primary rRNA binding proteins, it binds directly to 16S rRNA where it nucleates assembly of the head domain of the 30S subunit. Is located at the subunit interface close to the decoding center. The chain is Small ribosomal subunit protein uS7 from Thermoplasma volcanium (strain ATCC 51530 / DSM 4299 / JCM 9571 / NBRC 15438 / GSS1).